The following is a 350-amino-acid chain: Ribosome production factor 2 homolog (350 aa).

A Brix domain is found at lysine 28 to alanine 266. Over residues proline 192–glycine 202 the composition is skewed to polar residues. Disordered regions lie at residues proline 192–proline 219 and methionine 301–glycine 350.

The protein belongs to the RPF2 family. Component of a hexameric 5S RNP precursor complex, composed of 5S RNA, RRS1, RPF2, RPL5, RPL11 and SYO1; this complex acts as a precursor for ribosome assembly.

Its subcellular location is the nucleus. The protein resides in the nucleolus. In terms of biological role, involved in ribosomal large subunit assembly. The sequence is that of Ribosome production factor 2 homolog from Chaetomium thermophilum (strain DSM 1495 / CBS 144.50 / IMI 039719) (Thermochaetoides thermophila).